We begin with the raw amino-acid sequence, 433 residues long: 3-phosphoshikimate 1-carboxyvinyltransferase (433 aa).

3 residues coordinate 3-phosphoshikimate: K21, S22, and R26. Phosphoenolpyruvate is bound at residue K21. Phosphoenolpyruvate-binding residues include G96 and R124. 3-phosphoshikimate-binding residues include S167, S168, Q169, S195, D310, and K337. Phosphoenolpyruvate is bound at residue Q169. Catalysis depends on D310, which acts as the Proton acceptor. Positions 341, 384, and 410 each coordinate phosphoenolpyruvate.

Belongs to the EPSP synthase family. As to quaternary structure, monomer.

It is found in the cytoplasm. It carries out the reaction 3-phosphoshikimate + phosphoenolpyruvate = 5-O-(1-carboxyvinyl)-3-phosphoshikimate + phosphate. It functions in the pathway metabolic intermediate biosynthesis; chorismate biosynthesis; chorismate from D-erythrose 4-phosphate and phosphoenolpyruvate: step 6/7. Its function is as follows. Catalyzes the transfer of the enolpyruvyl moiety of phosphoenolpyruvate (PEP) to the 5-hydroxyl of shikimate-3-phosphate (S3P) to produce enolpyruvyl shikimate-3-phosphate and inorganic phosphate. The sequence is that of 3-phosphoshikimate 1-carboxyvinyltransferase from Clostridium botulinum (strain Alaska E43 / Type E3).